The sequence spans 396 residues: Elongation factor Tu (396 aa).

A tr-type G domain is found at 10–206 (KPHCNIGTIG…AVDAYIPQPE (197 aa)). The interval 19-26 (GHVDHGKT) is G1. GTP is bound at residue 19-26 (GHVDHGKT). Thr-26 contacts Mg(2+). The tract at residues 60–64 (GITIS) is G2. The tract at residues 81–84 (DCPG) is G3. Residues 81 to 85 (DCPGH) and 136 to 139 (NKVD) each bind GTP. A G4 region spans residues 136–139 (NKVD). The tract at residues 174-176 (SAL) is G5.

The protein belongs to the TRAFAC class translation factor GTPase superfamily. Classic translation factor GTPase family. EF-Tu/EF-1A subfamily. Monomer.

Its subcellular location is the cytoplasm. The catalysed reaction is GTP + H2O = GDP + phosphate + H(+). Functionally, GTP hydrolase that promotes the GTP-dependent binding of aminoacyl-tRNA to the A-site of ribosomes during protein biosynthesis. The polypeptide is Elongation factor Tu (Parvibaculum lavamentivorans (strain DS-1 / DSM 13023 / NCIMB 13966)).